We begin with the raw amino-acid sequence, 274 residues long: NADH-ubiquinone oxidoreductase chain 2 (274 aa).

Transmembrane regions (helical) follow at residues 28-48 (MIIMSALLLKSGAAPFHFWFP), 54-74 (LTWMNALVLMTWQKIAPLMLI), 79-99 (IKYLLLISVILSVIIGAIGGL), 107-127 (LMAFSSINHLGWMLSSLMISE), 128-148 (SIWLIYFFFYSFLSFVLTFMF), 171-191 (FTLFMNFLSLGGLPPFLGFLP), 206-226 (FLLLLMMMSTLITLFFYLRIC), and 254-274 (LIMTFFSIFGLFMISLFYFMF).

This sequence belongs to the complex I subunit 2 family.

The protein resides in the mitochondrion inner membrane. The enzyme catalyses a ubiquinone + NADH + 5 H(+)(in) = a ubiquinol + NAD(+) + 4 H(+)(out). In terms of biological role, core subunit of the mitochondrial membrane respiratory chain NADH dehydrogenase (Complex I) that is believed to belong to the minimal assembly required for catalysis. Complex I functions in the transfer of electrons from NADH to the respiratory chain. The immediate electron acceptor for the enzyme is believed to be ubiquinone. The protein is NADH-ubiquinone oxidoreductase chain 2 (mt:ND2) of Drosophila mauritiana (Fruit fly).